A 96-amino-acid chain; its full sequence is Large ribosomal subunit protein uL23 (96 aa).

This sequence belongs to the universal ribosomal protein uL23 family. In terms of assembly, part of the 50S ribosomal subunit. Contacts protein L29, and trigger factor when it is bound to the ribosome.

In terms of biological role, one of the early assembly proteins it binds 23S rRNA. One of the proteins that surrounds the polypeptide exit tunnel on the outside of the ribosome. Forms the main docking site for trigger factor binding to the ribosome. The sequence is that of Large ribosomal subunit protein uL23 from Caldicellulosiruptor saccharolyticus (strain ATCC 43494 / DSM 8903 / Tp8T 6331).